Here is a 183-residue protein sequence, read N- to C-terminus: MTSQIRQNYSTEVEAAVNRLVNLHLRASYTYLSLGFFFDRDDVALEGVGHFFRELAEEKREGAERLLEFQNDRGGRALFQDVQKPSQDEWGKTQEAMEAALAMEKNLNQALLDLHALGSARTDPHLCDFLESHYLDKEVKLIKKMGNHLTNLRRVAGPQPAQTGAPQGSLGEYLFERLTLKHD.

The region spanning 7 to 156 (QNYSTEVEAA…NHLTNLRRVA (150 aa)) is the Ferritin-like diiron domain. 5 residues coordinate Fe cation: E54, E57, E58, E61, and E64.

This sequence belongs to the ferritin family. As to quaternary structure, oligomer of 24 subunits. There are two types of subunits: L (light) chain and H (heavy) chain. The major chain can be light or heavy, depending on the species and tissue type. The functional molecule forms a roughly spherical shell with a diameter of 12 nm and contains a central cavity into which the insoluble mineral iron core is deposited. Interacts with NCOA4.

It is found in the cytoplasm. The protein resides in the cytoplasmic vesicle. The protein localises to the autophagosome. Its subcellular location is the autolysosome. In terms of biological role, stores iron in a soluble, non-toxic, readily available form. Important for iron homeostasis. Iron is taken up in the ferrous form and deposited as ferric hydroxides after oxidation. Also plays a role in delivery of iron to cells. Mediates iron uptake in capsule cells of the developing kidney. Degraded to release iron upon autophagy activation by nutrient starvation. This chain is Ferritin light chain 1 (Ftl1), found in Mus musculus (Mouse).